The chain runs to 176 residues: Centromere protein R (176 aa).

A Glycyl lysine isopeptide (Lys-Gly) (interchain with G-Cter in SUMO2) cross-link involves residue Lys-8. Ser-17 bears the Phosphoserine mark. The DD1 stretch occupies residues 20-50 (PSKIMRKKSITAFSPTTGTYQLSPFSSPRTP). Residue Lys-22 forms a Glycyl lysine isopeptide (Lys-Gly) (interchain with G-Cter in SUMO2) linkage. Residue Ser-28 is modified to Phosphoserine. Residues 34–48 (PTTGTYQLSPFSSPR) are compositionally biased toward polar residues. The tract at residues 34 to 80 (PTTGTYQLSPFSSPRTPKEQEHRDGPSNGTRKWSVLSSPARQDSTVK) is disordered. A compositionally biased stretch (basic and acidic residues) spans 49-58 (TPKEQEHRDG). Residues 60 to 80 (SNGTRKWSVLSSPARQDSTVK) show a composition bias toward polar residues. The Nuclear localization signal motif lies at 63-66 (TRKW). Ser-71 is modified (phosphoserine). Residues 82–112 (SDGFMMLLSKIERSSEKTMEIMKNLSSLQAL) adopt a coiled-coil conformation. An LXXLL motif motif is present at residues 118-122 (LEDLL). Residues 171–175 (LKAIL) carry the LXXIL motif motif.

Homodimer; mediated by the coiled coil domain. Interacts with CCNA2 and MTA1. Interacts with NFKB1 NF-kappa-B subunit. Component of the CENPA-CAD complex, composed of CENPI, CENPK, CENPL, CENPO, CENPP, CENPQ, CENPR and CENPS. The CENPA-CAD complex interacts with the CENPA-NAC complex, at least composed of CENPA, CENPC, CENPH, CENPM, CENPN, CENPT and CENPU. Interacts with TASOR.

Its subcellular location is the nucleus. The protein localises to the chromosome. It localises to the centromere. The protein resides in the kinetochore. In terms of biological role, transcription coregulator that can have both coactivator and corepressor functions. Involved in the coactivation of nuclear receptors for retinoid X (RXRs) and thyroid hormone (TRs) in a ligand-dependent fashion. In contrast, it does not coactivate nuclear receptors for retinoic acid, vitamin D, progesterone receptor, nor glucocorticoid. Acts as a coactivator for estrogen receptor alpha. Acts as a transcriptional corepressor via its interaction with the NFKB1 NF-kappa-B subunit, possibly by interfering with the transactivation domain of NFKB1. Induces apoptosis in breast cancer cells, but not in other cancer cells, via a caspase-2 mediated pathway that involves mitochondrial membrane permeabilization but does not require other caspases. May also act as an inhibitor of cyclin A-associated kinase. Also acts a component of the CENPA-CAD (nucleosome distal) complex, a complex recruited to centromeres which is involved in assembly of kinetochore proteins, mitotic progression and chromosome segregation. May be involved in incorporation of newly synthesized CENPA into centromeres via its interaction with the CENPA-NAC complex. The protein is Centromere protein R (Itgb3bp) of Rattus norvegicus (Rat).